The sequence spans 66 residues: Large ribosomal subunit protein uL29 (66 aa).

This sequence belongs to the universal ribosomal protein uL29 family.

The polypeptide is Large ribosomal subunit protein uL29 (Borrelia turicatae (strain 91E135)).